Reading from the N-terminus, the 562-residue chain is Gut esterase 1 (562 aa).

Residues 1-16 (MRIFLVSVILINACWA) form the signal peptide. Asn-73 carries N-linked (GlcNAc...) asparagine; atypical glycosylation. The cysteines at positions 75 and 93 are disulfide-linked. Residue Ser-198 is the Acyl-ester intermediate of the active site. An intrachain disulfide couples Cys-250 to Cys-258. Residues Glu-319 and His-452 each act as charge relay system in the active site. The Prevents secretion from ER motif lies at 559-562 (KDEL).

Belongs to the type-B carboxylesterase/lipase family. As to expression, expressed only in the intestine.

It is found in the endoplasmic reticulum lumen. The catalysed reaction is a carboxylic ester + H2O = an alcohol + a carboxylate + H(+). This Caenorhabditis elegans protein is Gut esterase 1 (ges-1).